The sequence spans 333 residues: Phenylalanine--tRNA ligase alpha subunit (333 aa).

Glutamate 248 is a binding site for Mg(2+).

It belongs to the class-II aminoacyl-tRNA synthetase family. Phe-tRNA synthetase alpha subunit type 1 subfamily. As to quaternary structure, tetramer of two alpha and two beta subunits. Requires Mg(2+) as cofactor.

Its subcellular location is the cytoplasm. It catalyses the reaction tRNA(Phe) + L-phenylalanine + ATP = L-phenylalanyl-tRNA(Phe) + AMP + diphosphate + H(+). The chain is Phenylalanine--tRNA ligase alpha subunit from Ureaplasma urealyticum serovar 10 (strain ATCC 33699 / Western).